The chain runs to 1848 residues: Cellulose-binding protein A (1848 aa).

A signal peptide spans 1 to 28; sequence MQKKKSLNLLLALMMVFALVLPSIPALA. Residues 29–190 form the CBM3 domain; sequence ATSSMSVEFY…GAKVLGTAPG (162 aa). Cohesin domains follow at residues 291-428, 435-570, 668-801, 810-943, 952-1085, 1094-1227, 1236-1369, 1377-1511, and 1709-1847; these read VTAT…TVTI, MQIS…SVTI, VTAT…SVTI, VKAT…RLTI, and FAVK…SVKV.

In terms of processing, the N-terminus is blocked. Glycosylated.

It localises to the secreted. Binds to cellulose fibers and coordinates cellulase enzymes. The chain is Cellulose-binding protein A (cbpA) from Clostridium cellulovorans.